Reading from the N-terminus, the 341-residue chain is uncharacterized protein (341 aa).

The next 10 helical transmembrane spans lie at 10–30 (ALGV…SFLT), 42–62 (PFLI…PWYF), 107–127 (LGFC…LGFT), 129–149 (VASF…LGTI), 155–175 (FTLS…IVVT), 192–212 (ALGN…SVMV), 226–246 (LFFG…LIIL), 263–283 (LIVL…WVIA), 290–310 (LLVT…DILL), and 313–333 (HYLN…FIVV).

Belongs to the TPT transporter family.

The protein resides in the vacuole membrane. It localises to the golgi apparatus membrane. This is an uncharacterized protein from Schizosaccharomyces pombe (strain 972 / ATCC 24843) (Fission yeast).